The sequence spans 679 residues: MDTSVYSHALDIWAKADLTNLQRELDADVIEIKDKETLSLNSRKSLATETKKFKKLEPEEKLNNVNKIIKQYQREIDNLTQRSKFSEKVLFDVYEKLSEAPDPQPLLQSSLEKLGKIDDSKELKEKISYLEDKLAKYADYETLKSRLLDLEQSSAKTLAKRLTAKTQEINSTWEEKGRNWKEREADLLKQLTNVQEQNKALEAKISKNIDIEGNGNEDGDQENNQKEVSTRIAEYNLVTQELETTQARIYQLEKRNEELSGALAKATSEAEKETELHAKELKLNQLESENALLSASYEQERKSTSHAINELKEQLNSVVAESESYKSELETVRRKLNNYSDYNKIKEELSALKKIEFGVNEDDSDNDIRSEDKNDNTFESSLLSANKKLQATLAEYRSKSTAQEEERNELKKSVDQLKQQIATLKEANEKLETDLEKVENVSPHFNETASMMSGVTRQMNNRTSHKMSPTSSIIGIPEDGELSGNQSTILPIVTKQRDRFRSRNMDLEKQLRQGNSEKGKLKLEISKLKGDNTKLYERIRYLQSYNNNNAPVNQSTERIDVESQYSRVYDESLHPMANFRQNELNHYKNKKLSALEKLFSSFAKVILQNKMTRMVFLFYCIGLHGLVFMMSMYVINISGYMTPEVGIVQSAKSSSNLNGGLGGAEKVAAGVGSVHGINR.

Residues 1 to 614 are Cytoplasmic-facing; it reads MDTSVYSHAL…VILQNKMTRM (614 aa). Coiled coils occupy residues 14-90 and 178-341; these read AKAD…EKVL and RNWK…NYSD. S364 bears the Phosphoserine mark. A coiled-coil region spans residues 385–444; that stretch reads ANKKLQATLAEYRSKSTAQEEERNELKKSVDQLKQQIATLKEANEKLETDLEKVENVSPH. Phosphoserine is present on residues S450 and S453. Residues 492–540 are a coiled coil; the sequence is IVTKQRDRFRSRNMDLEKQLRQGNSEKGKLKLEISKLKGDNTKLYERIR. S555 is subject to Phosphoserine. A helical; Anchor for type IV membrane protein transmembrane segment spans residues 615-635; the sequence is VFLFYCIGLHGLVFMMSMYVI. The Lumenal portion of the chain corresponds to 636–679; the sequence is NISGYMTPEVGIVQSAKSSSNLNGGLGGAEKVAAGVGSVHGINR.

Belongs to the CASP family.

It localises to the golgi apparatus membrane. In terms of biological role, may be involved in intra-Golgi transport. This Saccharomyces cerevisiae (strain ATCC 204508 / S288c) (Baker's yeast) protein is Protein CASP (COY1).